The following is a 117-amino-acid chain: Ribosome-binding factor A (117 aa).

Belongs to the RbfA family. In terms of assembly, monomer. Binds 30S ribosomal subunits, but not 50S ribosomal subunits or 70S ribosomes.

It is found in the cytoplasm. Functionally, one of several proteins that assist in the late maturation steps of the functional core of the 30S ribosomal subunit. Associates with free 30S ribosomal subunits (but not with 30S subunits that are part of 70S ribosomes or polysomes). Required for efficient processing of 16S rRNA. May interact with the 5'-terminal helix region of 16S rRNA. In Leptospira interrogans serogroup Icterohaemorrhagiae serovar Lai (strain 56601), this protein is Ribosome-binding factor A.